The sequence spans 319 residues: Acetyl esterase (319 aa).

An Involved in the stabilization of the negatively charged intermediate by the formation of the oxyanion hole motif is present at residues 91 to 93 (HGG). Catalysis depends on residues S165, D262, and H292.

This sequence belongs to the 'GDXG' lipolytic enzyme family. As to quaternary structure, homodimer. Interacts with MalT and MelA.

It localises to the cytoplasm. Displays esterase activity towards short chain fatty esters (acyl chain length of up to 8 carbons). Able to hydrolyze triacetylglycerol (triacetin) and tributyrylglycerol (tributyrin), but not trioleylglycerol (triolein) or cholesterol oleate. Negatively regulates MalT activity by antagonizing maltotriose binding. Inhibits MelA galactosidase activity. In Escherichia coli O45:K1 (strain S88 / ExPEC), this protein is Acetyl esterase.